The primary structure comprises 336 residues: Ornithine carbamoyltransferase, catabolic (336 aa).

Residues 57 to 60 (STRT), Gln84, Arg108, and 135 to 138 (HPTQ) each bind carbamoyl phosphate. L-ornithine contacts are provided by residues Asn168, Asp232, and 236–237 (SM). Carbamoyl phosphate-binding positions include 274-275 (CL) and Arg321.

It belongs to the aspartate/ornithine carbamoyltransferase superfamily. OTCase family.

The protein resides in the cytoplasm. The enzyme catalyses carbamoyl phosphate + L-ornithine = L-citrulline + phosphate + H(+). It functions in the pathway amino-acid degradation; L-arginine degradation via ADI pathway; carbamoyl phosphate from L-arginine: step 2/2. Its function is as follows. Reversibly catalyzes the transfer of the carbamoyl group from carbamoyl phosphate (CP) to the N(epsilon) atom of ornithine (ORN) to produce L-citrulline. In Pseudomonas putida (strain ATCC 47054 / DSM 6125 / CFBP 8728 / NCIMB 11950 / KT2440), this protein is Ornithine carbamoyltransferase, catabolic (arcB).